The following is a 599-amino-acid chain: Sulfite reductase [NADPH] flavoprotein alpha-component (599 aa).

Residues 64–202 (ITIISASQTG…AASEWRARVV (139 aa)) enclose the Flavodoxin-like domain. FMN contacts are provided by residues 70–75 (SQTGNA), 117–120 (STQG), and 153–162 (LGDSSYEFFC). The 215-residue stretch at 234-448 (DAPLVASLSV…IEHNDNFRLP (215 aa)) folds into the FAD-binding FR-type domain. FAD is bound by residues Thr322, Ala356, 386–389 (RLYS), 404–406 (TVG), Tyr410, and 419–422 (GGAS). NADP(+) is bound by residues 519-520 (SR), 525-529 (KVYVQ), and Asp561. An FAD-binding site is contributed by Tyr599.

Belongs to the NADPH-dependent sulphite reductase flavoprotein subunit CysJ family. The protein in the N-terminal section; belongs to the flavodoxin family. It in the C-terminal section; belongs to the flavoprotein pyridine nucleotide cytochrome reductase family. Alpha(8)-beta(8). The alpha component is a flavoprotein, the beta component is a hemoprotein. FAD is required as a cofactor. The cofactor is FMN.

It carries out the reaction hydrogen sulfide + 3 NADP(+) + 3 H2O = sulfite + 3 NADPH + 4 H(+). Its pathway is sulfur metabolism; hydrogen sulfide biosynthesis; hydrogen sulfide from sulfite (NADPH route): step 1/1. In terms of biological role, component of the sulfite reductase complex that catalyzes the 6-electron reduction of sulfite to sulfide. This is one of several activities required for the biosynthesis of L-cysteine from sulfate. The flavoprotein component catalyzes the electron flow from NADPH -&gt; FAD -&gt; FMN to the hemoprotein component. The chain is Sulfite reductase [NADPH] flavoprotein alpha-component from Shigella boydii serotype 4 (strain Sb227).